Here is a 357-residue protein sequence, read N- to C-terminus: Protein BMRF2 (357 aa).

The Virion surface segment spans residues 1–11 (MFSCKQHLSLG). At 12-32 (ACVFCLGLLASTPFIWCFVFA) the chain is embedded in the membrane. Topologically, residues 33–46 (NLLSLEIFSPWQTH) are intravirion. At 47–67 (VYRLGFPTACLMAVLWTLVPA) the chain is embedded in the membrane. The Virion surface segment spans residues 68–70 (KHA). A transmembrane span lies at residues 71–91 (VRAVTPAIMLNIASALIFFSL). Residues 92–98 (RVYSTST) lie on the Intravirion side of the membrane. A transmembrane helix spans residues 99–121 (WVSAPCLFLANLPLLCLWPRLAI). At 122 to 133 (EIVYICPAIHQR) the chain is on the virion surface side. A transmembrane helix spans residues 134 to 154 (FFELGLLLACTIFALSVVSRA). At 155 to 158 (LEVS) the chain is on the intravirion side. A transmembrane helix spans residues 159–179 (AVFMSPFFIFLALGSGSLAGA). Residues 180–217 (RRNQIYTSGLERRRSIFCARGDHSVASLKETLHKCPWD) are Virion surface-facing. The Integrin binding site signature appears at 199 to 201 (RGD). A membrane pass occupies residues 218–238 (LLAISALTVLVVCVMIVLHVH). Topologically, residues 239–240 (AE) are intravirion. Positions 241–261 (VFFGLSRYLPLFLCGAMASGG) form a transmembrane segment. The Virion surface portion of the chain corresponds to 262–267 (LYLGHS). Residues 268-288 (SIIACVMATLCTLSSVVVYFL) are membrane-embedded. The Intravirion portion of the chain corresponds to 289–298 (HETLGPLGKT). At 299-319 (VLFISIFVYYFSGVAALSAAM) the chain is embedded in the membrane. Topologically, residues 320–335 (RYKLKKFVNGPLVHLR) are virion surface. A transmembrane span lies at residues 336–356 (VVYMCCFVFTFCEYLLVTFIK). Ser-357 is a topological domain (intravirion).

The protein belongs to the herpesviridae BMRF2 family. In terms of assembly, interacts with BDLF2. Interacts with host beta1 integrin family. In terms of processing, extensively glycosylated by O-linked oligosaccharides.

Its subcellular location is the virion membrane. It is found in the host cell membrane. In terms of biological role, facilitates virus attachment to oral epithelial cells by binding to host beta1 integrin family. Participates in rearrangement of cellular actin to increase intercellular contacts by binding BDLF2 and thereby promote virus cell-to-cell spreading. In Homo sapiens (Human), this protein is Protein BMRF2.